Here is a 1216-residue protein sequence, read N- to C-terminus: ATP-dependent DNA helicase Q4 (1216 aa).

2 disordered regions span residues 72-100 and 113-171; these read EAQE…QSLL and NLKN…PRLG. Polar residues-rich tracts occupy residues 86-100 and 114-137; these read AATQ…QSLL and LKNT…SLST. Phosphoserine occurs at positions 179 and 181. The disordered stretch occupies residues 235-340; it reads SEVSVQSPEA…LHASPRPASL (106 aa). Composition is skewed to polar residues over residues 248–262 and 306–320; these read QPAQ…SINS and TQVN…SNQA. Residues 393-410 form a CCHC-type zinc finger; the sequence is DTCFRCGQFGHWASQCSQ. Residues 436–458 form a disordered region; the sequence is AQRTGTASCHHSGEETQPAAPEL. Residues 506–684 form the Helicase ATP-binding domain; that stretch reads IMRILSGIST…AQHLGIAGEF (179 aa). Position 519-526 (519-526) interacts with ATP; that stretch reads LPTGAGKS. A DEAH box motif is present at residues 627 to 630; the sequence is DEVH. Residues 705-872 enclose the Helicase C-terminal domain; the sequence is DSDQALVTLL…AVKRLVQRVF (168 aa). 4 residues coordinate Zn(2+): Cys875, Cys877, Cys906, and His909.

This sequence belongs to the helicase family. RecQ subfamily. In terms of assembly, interacts with UBR1 and UBR2. Interacts with MCM10; this interaction regulates RECQL4 unwinding activity. Interacts with TOPBP1. Requires Zn(2+) as cofactor.

The protein localises to the cytoplasm. It localises to the nucleus. The catalysed reaction is Couples ATP hydrolysis with the unwinding of duplex DNA by translocating in the 3'-5' direction.. It catalyses the reaction ATP + H2O = ADP + phosphate + H(+). Functionally, an ATP-dependent DNA helicase which unwinds dsDNA with a 3'-overhang in a 3'-5' direction. May play a role in development of the palate and the limbs. May modulate chromosome segregation. The sequence is that of ATP-dependent DNA helicase Q4 (Recql4) from Mus musculus (Mouse).